The chain runs to 818 residues: Probable helicase MAGATAMA 3 (818 aa).

The UvrD-like helicase ATP-binding domain maps to 259–559 (NKSQKEAIDV…KMLKTQYRMH (301 aa)). 280–287 (GPPGTGKT) lines the ATP pocket. Acidic residues-rich tracts occupy residues 781–790 (PDAPLYEDES) and 798–818 (GDDD…AGED). The tract at residues 781–818 (PDAPLYEDESLPVAPYGGDDDFGDGDADQDDVAMAGED) is disordered.

The protein belongs to the helicase family. As to expression, expressed in flowers, siliques, leaves, roots and shoot apex.

It is found in the nucleus. Functionally, probable helicase that may regulate RNA molecules involved in nucleolar organization and pollen tube guidance. The sequence is that of Probable helicase MAGATAMA 3 (MAA3) from Arabidopsis thaliana (Mouse-ear cress).